Consider the following 146-residue polypeptide: Large ribosomal subunit protein uL15 (146 aa).

Positions 1 to 13 (MKLHELHSAEGSR) are enriched in basic and acidic residues. The interval 1–55 (MKLHELHSAEGSRRNRKRVGRGTSSGYGKTSGRGQKGQLARQGGHTRLGFEGGQM) is disordered. Over residues 23–35 (TSSGYGKTSGRGQ) the composition is skewed to gly residues.

It belongs to the universal ribosomal protein uL15 family. In terms of assembly, part of the 50S ribosomal subunit.

Functionally, binds to the 23S rRNA. The chain is Large ribosomal subunit protein uL15 from Lactobacillus acidophilus (strain ATCC 700396 / NCK56 / N2 / NCFM).